Consider the following 389-residue polypeptide: MVHATSQSASTEKNVKPCIETDTEEVNHKNQTKQYLSESESGDEYDEDLENAVSECSYQTATTSSVADTDISNICDQLLVLSTTNHKSMGSTRGKKKRGKTAKKAKKANRAQKITEEEIEAIKKKKKLDADKAYELRQEQMKIRQEKIDASDRNKIYRRLAQTAVDMLRKEERKLPPEIKQLDEDLEYYVENSKFYLRINLRDRYLETRVDEISEKYIGPALEHKTELLKIYEDLIKRSLQAFRLFMFLKTLNEKSVDYTKFEVLTLSFVMKGFEDDWLEVNGTYEENESYLSFEKNILHDIPETDQHVNAAEFVMNKLIYYAKKDDDGTLNLKECHMKEAYTGAGQLIAEYKQCTNAIAFLQDNRENLAYNLMEEWFLVSRKPSPIVL.

The segment covering 1–12 has biased composition (polar residues); that stretch reads MVHATSQSASTE. 2 disordered regions span residues 1–49 and 86–111; these read MVHA…DEDL and HKSMGSTRGKKKRGKTAKKAKKANRA. Residues 40 to 49 show a composition bias toward acidic residues; sequence ESGDEYDEDL. Positions 93–110 are enriched in basic residues; that stretch reads RGKKKRGKTAKKAKKANR.

This is an uncharacterized protein from Caenorhabditis elegans.